The chain runs to 156 residues: Transcription antitermination protein NusB (156 aa).

This sequence belongs to the NusB family.

In terms of biological role, involved in transcription antitermination. Required for transcription of ribosomal RNA (rRNA) genes. Binds specifically to the boxA antiterminator sequence of the ribosomal RNA (rrn) operons. In Bartonella quintana (strain Toulouse) (Rochalimaea quintana), this protein is Transcription antitermination protein NusB.